A 115-amino-acid chain; its full sequence is 5-hydroxyisourate hydrolase (115 aa).

Positions 1–23 (MSGLTTHILDQASGKPAAGVGVR) are disordered. Substrate-binding residues include H7, R45, and Y112.

The protein belongs to the transthyretin family. 5-hydroxyisourate hydrolase subfamily. As to quaternary structure, homotetramer.

The enzyme catalyses 5-hydroxyisourate + H2O = 5-hydroxy-2-oxo-4-ureido-2,5-dihydro-1H-imidazole-5-carboxylate + H(+). Functionally, catalyzes the hydrolysis of 5-hydroxyisourate (HIU) to 2-oxo-4-hydroxy-4-carboxy-5-ureidoimidazoline (OHCU). This is 5-hydroxyisourate hydrolase from Caulobacter vibrioides (strain ATCC 19089 / CIP 103742 / CB 15) (Caulobacter crescentus).